We begin with the raw amino-acid sequence, 166 residues long: NAD(P)H-quinone oxidoreductase subunit I, chloroplastic (166 aa).

2 consecutive 4Fe-4S ferredoxin-type domains span residues 55–84 (GRIH…VDWK) and 95–124 (LNYS…MTEE). Residues Cys-64, Cys-67, Cys-70, Cys-74, Cys-104, Cys-107, Cys-110, and Cys-114 each contribute to the [4Fe-4S] cluster site.

Belongs to the complex I 23 kDa subunit family. NDH is composed of at least 16 different subunits, 5 of which are encoded in the nucleus. [4Fe-4S] cluster is required as a cofactor.

It localises to the plastid. The protein resides in the chloroplast thylakoid membrane. The enzyme catalyses a plastoquinone + NADH + (n+1) H(+)(in) = a plastoquinol + NAD(+) + n H(+)(out). It catalyses the reaction a plastoquinone + NADPH + (n+1) H(+)(in) = a plastoquinol + NADP(+) + n H(+)(out). In terms of biological role, NDH shuttles electrons from NAD(P)H:plastoquinone, via FMN and iron-sulfur (Fe-S) centers, to quinones in the photosynthetic chain and possibly in a chloroplast respiratory chain. The immediate electron acceptor for the enzyme in this species is believed to be plastoquinone. Couples the redox reaction to proton translocation, and thus conserves the redox energy in a proton gradient. The polypeptide is NAD(P)H-quinone oxidoreductase subunit I, chloroplastic (Stevia rebaudiana (Stevia)).